The chain runs to 235 residues: Small ribosomal subunit protein uS2c (235 aa).

The protein belongs to the universal ribosomal protein uS2 family.

It is found in the plastid. The protein resides in the chloroplast. The polypeptide is Small ribosomal subunit protein uS2c (rps2) (Marchantia polymorpha (Common liverwort)).